The sequence spans 208 residues: Small ribosomal subunit protein uS3 (208 aa).

The region spanning 16-85 is the KH type-2 domain; that stretch reads IDEYFKKELS…KPQIDVKPVE (70 aa).

Belongs to the universal ribosomal protein uS3 family. As to quaternary structure, part of the 30S ribosomal subunit.

Its function is as follows. Binds the lower part of the 30S subunit head. This chain is Small ribosomal subunit protein uS3, found in Methanocaldococcus jannaschii (strain ATCC 43067 / DSM 2661 / JAL-1 / JCM 10045 / NBRC 100440) (Methanococcus jannaschii).